We begin with the raw amino-acid sequence, 652 residues long: DNA ligase (652 aa).

NAD(+) is bound by residues 29–33, 78–79, and glutamate 107; these read DSDYD and SL. Residue lysine 109 is the N6-AMP-lysine intermediate of the active site. 4 residues coordinate NAD(+): arginine 130, glutamate 164, lysine 278, and lysine 302. Zn(2+)-binding residues include cysteine 395, cysteine 398, cysteine 413, and cysteine 418. One can recognise a BRCT domain in the interval 577 to 652; sequence NSDAALFGLT…IEDEDWLRKL (76 aa).

Belongs to the NAD-dependent DNA ligase family. LigA subfamily. The cofactor is Mg(2+). Requires Mn(2+) as cofactor.

It catalyses the reaction NAD(+) + (deoxyribonucleotide)n-3'-hydroxyl + 5'-phospho-(deoxyribonucleotide)m = (deoxyribonucleotide)n+m + AMP + beta-nicotinamide D-nucleotide.. Functionally, DNA ligase that catalyzes the formation of phosphodiester linkages between 5'-phosphoryl and 3'-hydroxyl groups in double-stranded DNA using NAD as a coenzyme and as the energy source for the reaction. It is essential for DNA replication and repair of damaged DNA. This chain is DNA ligase, found in Streptococcus pyogenes serotype M18 (strain MGAS8232).